The sequence spans 110 residues: Lichenan-specific phosphotransferase enzyme IIA component (110 aa).

Residues Glu-3–Lys-101 form the PTS EIIA type-3 domain. His-77 (tele-phosphohistidine intermediate; by HPr) is an active-site residue.

Its subcellular location is the cytoplasm. Functionally, the phosphoenolpyruvate-dependent sugar phosphotransferase system (PTS), a major carbohydrate active -transport system, catalyzes the phosphorylation of incoming sugar substrates concomitant with their translocation across the cell membrane. This system is involved in lichenan transport. The sequence is that of Lichenan-specific phosphotransferase enzyme IIA component (licA) from Bacillus subtilis (strain 168).